A 151-amino-acid chain; its full sequence is Peptide methionine sulfoxide reductase MsrB (151 aa).

Residues 5 to 127 (KEERLKQLTR…NSAALRFVPK (123 aa)) enclose the MsrB domain. Residue Cys116 is the Nucleophile of the active site.

This sequence belongs to the MsrB Met sulfoxide reductase family.

The enzyme catalyses L-methionyl-[protein] + [thioredoxin]-disulfide + H2O = L-methionyl-(R)-S-oxide-[protein] + [thioredoxin]-dithiol. The chain is Peptide methionine sulfoxide reductase MsrB from Bacillus licheniformis (strain ATCC 14580 / DSM 13 / JCM 2505 / CCUG 7422 / NBRC 12200 / NCIMB 9375 / NCTC 10341 / NRRL NRS-1264 / Gibson 46).